We begin with the raw amino-acid sequence, 1155 residues long: DNA-directed RNA polymerase subunit beta (1155 aa).

It belongs to the RNA polymerase beta chain family. In terms of assembly, the RNAP catalytic core consists of 2 alpha, 1 beta, 1 beta' and 1 omega subunit. When a sigma factor is associated with the core the holoenzyme is formed, which can initiate transcription.

It carries out the reaction RNA(n) + a ribonucleoside 5'-triphosphate = RNA(n+1) + diphosphate. Its function is as follows. DNA-dependent RNA polymerase catalyzes the transcription of DNA into RNA using the four ribonucleoside triphosphates as substrates. The polypeptide is DNA-directed RNA polymerase subunit beta (Borrelia recurrentis (strain A1)).